The sequence spans 141 residues: Ribosome maturation factor RimP (141 aa).

It belongs to the RimP family.

The protein localises to the cytoplasm. Its function is as follows. Required for maturation of 30S ribosomal subunits. This is Ribosome maturation factor RimP from Laribacter hongkongensis (strain HLHK9).